The primary structure comprises 318 residues: Beta-galactosidase small subunit (318 aa).

This sequence belongs to the bacterial beta-galactosidase small subunit family. In terms of assembly, heterodimer of a large (LacL) and a small subunit (LacM).

It carries out the reaction Hydrolysis of terminal non-reducing beta-D-galactose residues in beta-D-galactosides.. Component of a beta-galactosidase. The protein is Beta-galactosidase small subunit of Latilactobacillus sakei (Lactobacillus sakei).